A 246-amino-acid polypeptide reads, in one-letter code: MLLIPAIDLKDGRCVRLRQGDLDDVTVFSEDPAAIASNWLAQGARRLHLVDLNGAVAGKPKNEAPIKAILKAVGDDIPVQIGGGIRDLDTIERYLDAGISYVIIGTAAVKNPGFLHDACGAFPGQIIVGLDARDGKIATDGWSKLTRHDVLDLAKKFEDYGCEAIIYTDIGRDGMLSGVNVEATVRLAQHVRIPVYASGGIAGMADIEALCAVEADGVEGAILGRSIYEGALDFKVAQARADELTS.

The active-site Proton acceptor is the Asp-8. Catalysis depends on Asp-131, which acts as the Proton donor.

This sequence belongs to the HisA/HisF family.

Its subcellular location is the cytoplasm. It carries out the reaction 1-(5-phospho-beta-D-ribosyl)-5-[(5-phospho-beta-D-ribosylamino)methylideneamino]imidazole-4-carboxamide = 5-[(5-phospho-1-deoxy-D-ribulos-1-ylimino)methylamino]-1-(5-phospho-beta-D-ribosyl)imidazole-4-carboxamide. Its pathway is amino-acid biosynthesis; L-histidine biosynthesis; L-histidine from 5-phospho-alpha-D-ribose 1-diphosphate: step 4/9. The protein is 1-(5-phosphoribosyl)-5-[(5-phosphoribosylamino)methylideneamino] imidazole-4-carboxamide isomerase of Bordetella avium (strain 197N).